Consider the following 345-residue polypeptide: Dihydroorotase (345 aa).

Zn(2+) is bound by residues histidine 13 and histidine 15. Substrate contacts are provided by residues 15-17 and asparagine 41; that span reads HLR. Zn(2+)-binding residues include lysine 100, histidine 137, and histidine 175. The residue at position 100 (lysine 100) is an N6-carboxylysine. A substrate-binding site is contributed by histidine 137. A substrate-binding site is contributed by leucine 220. Residue aspartate 248 participates in Zn(2+) binding. Aspartate 248 is a catalytic residue. Substrate is bound by residues histidine 252 and alanine 264.

The protein belongs to the metallo-dependent hydrolases superfamily. DHOase family. Class II DHOase subfamily. As to quaternary structure, homodimer. The cofactor is Zn(2+).

The catalysed reaction is (S)-dihydroorotate + H2O = N-carbamoyl-L-aspartate + H(+). Its pathway is pyrimidine metabolism; UMP biosynthesis via de novo pathway; (S)-dihydroorotate from bicarbonate: step 3/3. Catalyzes the reversible cyclization of carbamoyl aspartate to dihydroorotate. In Laribacter hongkongensis (strain HLHK9), this protein is Dihydroorotase.